We begin with the raw amino-acid sequence, 232 residues long: Orotidine 5'-phosphate decarboxylase (232 aa).

Residues Asp-13, Lys-35, 62-71 (DLKFHDIPNT), Thr-121, Arg-182, Gln-191, Gly-211, and Arg-212 each bind substrate. The active-site Proton donor is the Lys-64.

The protein belongs to the OMP decarboxylase family. Type 1 subfamily. Homodimer.

It catalyses the reaction orotidine 5'-phosphate + H(+) = UMP + CO2. It functions in the pathway pyrimidine metabolism; UMP biosynthesis via de novo pathway; UMP from orotate: step 2/2. Catalyzes the decarboxylation of orotidine 5'-monophosphate (OMP) to uridine 5'-monophosphate (UMP). In Acinetobacter baumannii (strain AB0057), this protein is Orotidine 5'-phosphate decarboxylase.